The sequence spans 763 residues: Exo-1,4-beta-xylosidase bxlB (763 aa).

An N-terminal signal peptide occupies residues 1–23 (MAVFKSWNLALLSSLFIPALCQS). Asn-63 carries an N-linked (GlcNAc...) asparagine glycan. The active site involves Asp-288. N-linked (GlcNAc...) asparagine glycans are attached at residues Asn-340, Asn-408, Asn-419, Asn-458, Asn-621, and Asn-760.

Belongs to the glycosyl hydrolase 3 family.

It localises to the secreted. It carries out the reaction Hydrolysis of (1-&gt;4)-beta-D-xylans, to remove successive D-xylose residues from the non-reducing termini.. It participates in glycan degradation; xylan degradation. Its function is as follows. Xylan 1,4-beta-xylosidase involved in the hydrolysis of xylan, a major structural heterogeneous polysaccharide found in plant biomass representing the second most abundant polysaccharide in the biosphere, after cellulose. Active against rye arabinoxylan and xylohexaose, but not paranitrophenyl-beta-xyloside. This Emericella nidulans (strain FGSC A4 / ATCC 38163 / CBS 112.46 / NRRL 194 / M139) (Aspergillus nidulans) protein is Exo-1,4-beta-xylosidase bxlB (bxlB).